The chain runs to 201 residues: Mediator of RNA polymerase II transcription subunit 22 (201 aa).

Residues 93–123 (SVNESINQRNQQLRTLREECDKKLIALRDDI) adopt a coiled-coil conformation. The disordered stretch occupies residues 182-201 (SQIHTPPHLNGHGAGMTEHT).

The protein belongs to the Mediator complex subunit 22 family. As to quaternary structure, component of the Mediator complex.

It localises to the nucleus. Functionally, component of the Mediator complex, a coactivator involved in the regulated transcription of nearly all RNA polymerase II-dependent genes. Mediator functions as a bridge to convey information from gene-specific regulatory proteins to the basal RNA polymerase II transcription machinery. Mediator is recruited to promoters by direct interactions with regulatory proteins and serves as a scaffold for the assembly of a functional preinitiation complex with RNA polymerase II and the general transcription factors. This chain is Mediator of RNA polymerase II transcription subunit 22 (med22), found in Xenopus laevis (African clawed frog).